Reading from the N-terminus, the 62-residue chain is Large ribosomal subunit protein bL32 (62 aa).

The segment covering 1–19 has biased composition (basic residues); that stretch reads MPNPKRRHSKARTGNRRAH. The segment at 1–23 is disordered; sequence MPNPKRRHSKARTGNRRAHDHLS.

It belongs to the bacterial ribosomal protein bL32 family.

The chain is Large ribosomal subunit protein bL32 from Koribacter versatilis (strain Ellin345).